The following is a 631-amino-acid chain: Glycosyltransferase-like protein LARGE (631 aa).

The Cytoplasmic segment spans residues 1 to 6; that stretch reads MQSNYS. A helical; Signal-anchor for type II membrane protein transmembrane segment spans residues 7–27; sequence ISYFLLILFTGTSSYFTIWNF. Residues 28–631 are Lumenal-facing; it reads VDHTRVGAFP…TASRLGIKLR (604 aa). Residues asparagine 95, asparagine 105, asparagine 167, asparagine 177, asparagine 287, asparagine 400, asparagine 485, asparagine 502, asparagine 521, asparagine 529, and asparagine 593 are each glycosylated (N-linked (GlcNAc...) asparagine).

This sequence belongs to the glycosyltransferase 8 family.

The protein resides in the golgi apparatus membrane. In terms of biological role, probable glycosyltransferase. This Caenorhabditis elegans protein is Glycosyltransferase-like protein LARGE (lge-1).